The following is a 551-amino-acid chain: Probable 4-coumarate--CoA ligase 1 (551 aa).

Residues Ser205, Ser206, Gly207, Thr208, Thr209, and Lys213 each contribute to the ATP site. Tyr253 provides a ligand contact to (E)-4-coumaroyl-AMP. Lys274 contributes to the CoA binding site. Residues 276 to 346 are SBD1; the sequence is EPVRFLELIQ…RFKGRLVIKQ (71 aa). Ala323, Gln346, Gly347, and Thr351 together coordinate (E)-4-coumaroyl-AMP. Positions 346, 347, 351, 430, and 445 each coordinate ATP. Positions 347 to 409 are SBD2; that stretch reads GYGATELSPA…IKGPNVMLGY (63 aa). Residues Lys447 and Lys451 each coordinate (E)-4-coumaroyl-AMP. CoA-binding residues include Lys453 and Gly454. Lys537 is an ATP binding site.

It belongs to the ATP-dependent AMP-binding enzyme family. The cofactor is Mg(2+).

The catalysed reaction is (E)-4-coumarate + ATP + CoA = (E)-4-coumaroyl-CoA + AMP + diphosphate. It catalyses the reaction (E)-4-coumarate + ATP + H(+) = (E)-4-coumaroyl-AMP + diphosphate. It carries out the reaction (E)-4-coumaroyl-AMP + CoA = (E)-4-coumaroyl-CoA + AMP + H(+). It participates in phytoalexin biosynthesis; 3,4',5-trihydroxystilbene biosynthesis; 3,4',5-trihydroxystilbene from trans-4-coumarate: step 1/2. In terms of biological role, carboxylate--CoA ligase that may use 4-coumarate as substrate. Follows a two-step reaction mechanism, wherein the carboxylate substrate first undergoes adenylation by ATP, followed by a thioesterification in the presence of CoA to yield the final CoA thioester. The polypeptide is Probable 4-coumarate--CoA ligase 1 (4cl1) (Dictyostelium discoideum (Social amoeba)).